Here is a 431-residue protein sequence, read N- to C-terminus: Glutamate-1-semialdehyde 2,1-aminomutase (431 aa).

Lys-269 carries the post-translational modification N6-(pyridoxal phosphate)lysine.

The protein belongs to the class-III pyridoxal-phosphate-dependent aminotransferase family. HemL subfamily. As to quaternary structure, homodimer. Pyridoxal 5'-phosphate is required as a cofactor.

It is found in the cytoplasm. The enzyme catalyses (S)-4-amino-5-oxopentanoate = 5-aminolevulinate. It functions in the pathway porphyrin-containing compound metabolism; protoporphyrin-IX biosynthesis; 5-aminolevulinate from L-glutamyl-tRNA(Glu): step 2/2. The protein operates within porphyrin-containing compound metabolism; chlorophyll biosynthesis. The chain is Glutamate-1-semialdehyde 2,1-aminomutase from Pelodictyon phaeoclathratiforme (strain DSM 5477 / BU-1).